We begin with the raw amino-acid sequence, 257 residues long: Uridylate kinase (257 aa).

Position 8–11 (8–11) interacts with ATP; that stretch reads KLSG. The segment at 21 to 26 is involved in allosteric activation by GTP; the sequence is GSAGFG. UMP is bound at residue Gly-56. 2 residues coordinate ATP: Gly-57 and Arg-61. UMP is bound by residues Asp-75 and 136 to 143; that span reads NGAPFFTT. Residues Asn-164, Tyr-170, and Asp-173 each coordinate ATP.

It belongs to the UMP kinase family. As to quaternary structure, homohexamer.

It localises to the cytoplasm. The enzyme catalyses UMP + ATP = UDP + ADP. It functions in the pathway pyrimidine metabolism; CTP biosynthesis via de novo pathway; UDP from UMP (UMPK route): step 1/1. Allosterically activated by GTP. Inhibited by UTP. Functionally, catalyzes the reversible phosphorylation of UMP to UDP. The polypeptide is Uridylate kinase (Deinococcus geothermalis (strain DSM 11300 / CIP 105573 / AG-3a)).